Consider the following 257-residue polypeptide: Undecaprenyl-diphosphatase (257 aa).

Helical transmembrane passes span 4-24, 41-61, 74-94, 103-123, 133-153, 173-193, 209-229, and 236-256; these read LIRV…PISS, SVTL…VVFW, VIGL…TIKT, PLLA…LGRL, LGLG…LPGI, SVTF…VLAI, VLSI…KWLI, and RLHW…LLNL.

The protein belongs to the UppP family.

The protein localises to the cell inner membrane. The enzyme catalyses di-trans,octa-cis-undecaprenyl diphosphate + H2O = di-trans,octa-cis-undecaprenyl phosphate + phosphate + H(+). Its function is as follows. Catalyzes the dephosphorylation of undecaprenyl diphosphate (UPP). Confers resistance to bacitracin. This chain is Undecaprenyl-diphosphatase, found in Rhodopirellula baltica (strain DSM 10527 / NCIMB 13988 / SH1).